We begin with the raw amino-acid sequence, 290 residues long: UPF0761 membrane protein ASA_4118 (290 aa).

6 helical membrane passes run 48–68, 104–124, 144–164, 182–202, 216–236, and 250–270; these read LLSL…FPVF, NTTA…ISAI, FAMY…SIAI, IGYL…FLLV, AFIG…GFAI, and ALAT…VVLL.

This sequence belongs to the UPF0761 family.

Its subcellular location is the cell inner membrane. The chain is UPF0761 membrane protein ASA_4118 from Aeromonas salmonicida (strain A449).